The sequence spans 291 residues: Flavonol synthase/flavanone 3-hydroxylase (291 aa).

The Fe2OG dioxygenase domain occupies 151–250 (CWYVMNINHY…RMSWPVLVSP (100 aa)). Fe cation is bound by residues histidine 175, aspartate 177, and histidine 231.

This sequence belongs to the iron/ascorbate-dependent oxidoreductase family. L-ascorbate serves as cofactor. Requires Fe cation as cofactor.

The protein localises to the cytoplasm. The catalysed reaction is a (2R,3R)-dihydroflavonol + 2-oxoglutarate + O2 = a flavonol + succinate + CO2 + H2O. It catalyses the reaction a (2S)-flavan-4-one + 2-oxoglutarate + O2 = a (2R,3R)-dihydroflavonol + succinate + CO2. The protein operates within secondary metabolite biosynthesis; flavonoid biosynthesis. In terms of biological role, catalyzes the formation of flavonols from dihydroflavonols. It can act on dihydrokaempferol to produce kaempferol, on dihydroquercetin to produce quercitin and on dihydromyricetin to produce myricetin. The chain is Flavonol synthase/flavanone 3-hydroxylase from Matthiola incana (Common stock).